A 446-amino-acid chain; its full sequence is N-succinylarginine dihydrolase (446 aa).

Substrate is bound by residues 19–28 (AGLSFGNVAS), asparagine 110, and 137–138 (HR). The active site involves glutamate 174. Arginine 213 contacts substrate. The active site involves histidine 249. Substrate contacts are provided by aspartate 251 and asparagine 364. Catalysis depends on cysteine 370, which acts as the Nucleophile.

The protein belongs to the succinylarginine dihydrolase family. In terms of assembly, homodimer.

The catalysed reaction is N(2)-succinyl-L-arginine + 2 H2O + 2 H(+) = N(2)-succinyl-L-ornithine + 2 NH4(+) + CO2. Its pathway is amino-acid degradation; L-arginine degradation via AST pathway; L-glutamate and succinate from L-arginine: step 2/5. Its function is as follows. Catalyzes the hydrolysis of N(2)-succinylarginine into N(2)-succinylornithine, ammonia and CO(2). The protein is N-succinylarginine dihydrolase of Burkholderia ambifaria (strain MC40-6).